The sequence spans 419 residues: UDP-N-acetylglucosamine 1-carboxyvinyltransferase (419 aa).

22 to 23 (KN) contributes to the phosphoenolpyruvate binding site. R95 contacts UDP-N-acetyl-alpha-D-glucosamine. The active-site Proton donor is the C119. 2-(S-cysteinyl)pyruvic acid O-phosphothioketal is present on C119. UDP-N-acetyl-alpha-D-glucosamine is bound by residues 164-167 (KVSV), D308, and I330.

Belongs to the EPSP synthase family. MurA subfamily.

The protein resides in the cytoplasm. The catalysed reaction is phosphoenolpyruvate + UDP-N-acetyl-alpha-D-glucosamine = UDP-N-acetyl-3-O-(1-carboxyvinyl)-alpha-D-glucosamine + phosphate. The protein operates within cell wall biogenesis; peptidoglycan biosynthesis. In terms of biological role, cell wall formation. Adds enolpyruvyl to UDP-N-acetylglucosamine. The polypeptide is UDP-N-acetylglucosamine 1-carboxyvinyltransferase (Rickettsia conorii (strain ATCC VR-613 / Malish 7)).